The sequence spans 54 residues: Ribulose bisphosphate carboxylase large chain (54 aa).

Residues 1–2 (MS) constitute a propeptide that is removed on maturation. Proline 3 is subject to N-acetylproline. N6,N6,N6-trimethyllysine is present on lysine 14.

Belongs to the RuBisCO large chain family. Type I subfamily. In terms of assembly, heterohexadecamer of 8 large chains and 8 small chains.

It localises to the plastid. Its subcellular location is the chloroplast. The enzyme catalyses 2 (2R)-3-phosphoglycerate + 2 H(+) = D-ribulose 1,5-bisphosphate + CO2 + H2O. It carries out the reaction D-ribulose 1,5-bisphosphate + O2 = 2-phosphoglycolate + (2R)-3-phosphoglycerate + 2 H(+). Its function is as follows. RuBisCO catalyzes two reactions: the carboxylation of D-ribulose 1,5-bisphosphate, the primary event in carbon dioxide fixation, as well as the oxidative fragmentation of the pentose substrate in the photorespiration process. Both reactions occur simultaneously and in competition at the same active site. The polypeptide is Ribulose bisphosphate carboxylase large chain (rbcL) (Magnolia liliiflora (Mulan magnolia)).